The following is a 232-amino-acid chain: DnaJ homolog subfamily B member 8 (232 aa).

One can recognise a J domain in the interval 3 to 69; the sequence is NYYEVLGVQA…KKRSLYDRAG (67 aa).

As to quaternary structure, interacts with histone deacetylases HDAC4, HDAC6, and SIRT2, HDAC activity is required for antiaggregation.

Efficient suppressor of aggregation and toxicity of disease-associated polyglutamine proteins. The chain is DnaJ homolog subfamily B member 8 (DNAJB8) from Homo sapiens (Human).